A 458-amino-acid polypeptide reads, in one-letter code: F-box/LRR-repeat protein At5g02910 (458 aa).

The region spanning 10–56 is the F-box domain; it reads MDFISSLPDEILHHILSSVPTKSAIRTSLLSKRWRYVWSETPSLSID. LRR repeat units follow at residues 57–84, 86–112, 133–161, 162–187, 226–251, 260–285, 325–353, and 389–414; these read CRRA…HLHT, LLNR…SLES, KQLF…LSLS, NCTL…ELLY, CLRL…DLNI, TAGF…TIGG, KLLR…HLND, and ESNL…VVLL.

This Arabidopsis thaliana (Mouse-ear cress) protein is F-box/LRR-repeat protein At5g02910.